The chain runs to 330 residues: G-protein coupled receptor 3 (330 aa).

Residues 1 to 42 (MMWGAGSPLAWLSAGSGNVNVSSVGPAEGPTGPAAPLPSPKA) lie on the Extracellular side of the membrane. An N-linked (GlcNAc...) asparagine glycan is attached at N20. Residues 43–62 (WDVVLCISGTLVSCENALVV) form a helical membrane-spanning segment. Residues 63 to 74 (AIIVGTPAFRAP) are Cytoplasmic-facing. The helical transmembrane segment at 75-98 (MFLLVGSLAVADLLAGLGLVLHFA) threads the bilayer. At 99-110 (AVFCIGSAEMSL) the chain is on the extracellular side. The chain crosses the membrane as a helical span at residues 111-132 (VLVGVLAMAFTASIGSLLAITV). Over 133 to 153 (DRYLSLYNALTYYSETTVTRT) the chain is Cytoplasmic. Residues 154–173 (YVMLALVWGGALGLGLLPVL) form a helical membrane-spanning segment. The Extracellular portion of the chain corresponds to 174–198 (AWNCLDGLTTCGVVYPLSKNHLVVL). The chain crosses the membrane as a helical span at residues 199-217 (AIAFFMVFGIMLQLYAQIC). Over 218 to 245 (RIVCRHAQQIALQRHLLPASHYVATRKG) the chain is Cytoplasmic. Residues 246 to 272 (IATLAVVLGAFAACWLPFTVYCLLGDA) traverse the membrane as a helical segment. Over 273–277 (HSPPL) the chain is Extracellular. Residues 278–299 (YTYLTLLPATYNSMINPIIYAF) form a helical membrane-spanning segment. The Cytoplasmic portion of the chain corresponds to 300-330 (RNQDVQKVLWAVCCCCSSSKIPFRSRSPSDV). The S-palmitoyl cysteine moiety is linked to residue C313. S324, S326, and S328 each carry phosphoserine.

It belongs to the G-protein coupled receptor 1 family. As to expression, expressed predominantly in the central nervous system, and at low levels in the lung, kidney, testis, ovary and eye. Highly expressed in regions of the brain implicated in the Alzheimer disease.

It is found in the cell membrane. Functionally, constitutively active G-protein coupled receptor that maintains high 3'-5'-cyclic adenosine monophosphate (cAMP) levels that a plays a role in serveral processes including meiotic arrest in oocytes or neuronal development via activation of numerous intracellular signaling pathways. Acts as an essential activator of thermogenic adipocytes and drives thermogenesis via its intrinsic G(s)-coupling activity without the requirement of a ligand. Has a potential role in modulating a number of brain functions, including behavioral responses to stress, amyloid-beta peptide generation in neurons. Stimulates neurite outgrowth in cerebellar granular neurons modulated via PKA, ERK, and most strongly PI3K-mediated signaling pathways. The polypeptide is G-protein coupled receptor 3 (GPR3) (Homo sapiens (Human)).